A 190-amino-acid polypeptide reads, in one-letter code: Peptidyl-tRNA hydrolase (190 aa).

Residue tyrosine 14 coordinates tRNA. Histidine 19 (proton acceptor) is an active-site residue. Tyrosine 64, asparagine 66, and asparagine 112 together coordinate tRNA.

This sequence belongs to the PTH family. As to quaternary structure, monomer.

It localises to the cytoplasm. The enzyme catalyses an N-acyl-L-alpha-aminoacyl-tRNA + H2O = an N-acyl-L-amino acid + a tRNA + H(+). Functionally, hydrolyzes ribosome-free peptidyl-tRNAs (with 1 or more amino acids incorporated), which drop off the ribosome during protein synthesis, or as a result of ribosome stalling. Its function is as follows. Catalyzes the release of premature peptidyl moieties from peptidyl-tRNA molecules trapped in stalled 50S ribosomal subunits, and thus maintains levels of free tRNAs and 50S ribosomes. The sequence is that of Peptidyl-tRNA hydrolase from Chlorobium phaeobacteroides (strain DSM 266 / SMG 266 / 2430).